Here is a 31-residue protein sequence, read N- to C-terminus: MNHGSFFKATRPGLDHWFYWSKKNRWQTILL.

This is an uncharacterized protein from Caenorhabditis elegans.